The following is a 159-amino-acid chain: Cyclic pyranopterin monophosphate synthase (159 aa).

Substrate is bound by residues 75–77 (LCH) and 113–114 (ME). Aspartate 128 is an active-site residue.

It belongs to the MoaC family. As to quaternary structure, homohexamer; trimer of dimers.

It carries out the reaction (8S)-3',8-cyclo-7,8-dihydroguanosine 5'-triphosphate = cyclic pyranopterin phosphate + diphosphate. It functions in the pathway cofactor biosynthesis; molybdopterin biosynthesis. In terms of biological role, catalyzes the conversion of (8S)-3',8-cyclo-7,8-dihydroguanosine 5'-triphosphate to cyclic pyranopterin monophosphate (cPMP). In Aliivibrio salmonicida (strain LFI1238) (Vibrio salmonicida (strain LFI1238)), this protein is Cyclic pyranopterin monophosphate synthase.